A 645-amino-acid polypeptide reads, in one-letter code: Threonine--tRNA ligase (645 aa).

The TGS domain occupies 3–64; that stretch reads DMINITFPDG…EQDGTITIVT (62 aa). The segment at 247–544 is catalytic; the sequence is DHRKLGKELG…LLEEYKGAFP (298 aa). Zn(2+) is bound by residues C340, H391, and H521.

The protein belongs to the class-II aminoacyl-tRNA synthetase family. Homodimer. Zn(2+) serves as cofactor.

It localises to the cytoplasm. The catalysed reaction is tRNA(Thr) + L-threonine + ATP = L-threonyl-tRNA(Thr) + AMP + diphosphate + H(+). Catalyzes the attachment of threonine to tRNA(Thr) in a two-step reaction: L-threonine is first activated by ATP to form Thr-AMP and then transferred to the acceptor end of tRNA(Thr). Also edits incorrectly charged L-seryl-tRNA(Thr). The sequence is that of Threonine--tRNA ligase from Halalkalibacterium halodurans (strain ATCC BAA-125 / DSM 18197 / FERM 7344 / JCM 9153 / C-125) (Bacillus halodurans).